The sequence spans 73 residues: Small ribosomal subunit protein bS18 (73 aa).

It belongs to the bacterial ribosomal protein bS18 family. In terms of assembly, part of the 30S ribosomal subunit. Forms a tight heterodimer with protein bS6.

Its function is as follows. Binds as a heterodimer with protein bS6 to the central domain of the 16S rRNA, where it helps stabilize the platform of the 30S subunit. This chain is Small ribosomal subunit protein bS18, found in Prochlorococcus marinus (strain SARG / CCMP1375 / SS120).